Consider the following 282-residue polypeptide: 2-dehydro-3-deoxyphosphooctonate aldolase (282 aa).

This sequence belongs to the KdsA family.

It is found in the cytoplasm. The catalysed reaction is D-arabinose 5-phosphate + phosphoenolpyruvate + H2O = 3-deoxy-alpha-D-manno-2-octulosonate-8-phosphate + phosphate. Its pathway is carbohydrate biosynthesis; 3-deoxy-D-manno-octulosonate biosynthesis; 3-deoxy-D-manno-octulosonate from D-ribulose 5-phosphate: step 2/3. It functions in the pathway bacterial outer membrane biogenesis; lipopolysaccharide biosynthesis. This is 2-dehydro-3-deoxyphosphooctonate aldolase from Shewanella sediminis (strain HAW-EB3).